The chain runs to 465 residues: ATP synthase subunit beta (465 aa).

148 to 155 contacts ATP; the sequence is GGAGVGKT.

Belongs to the ATPase alpha/beta chains family. In terms of assembly, F-type ATPases have 2 components, CF(1) - the catalytic core - and CF(0) - the membrane proton channel. CF(1) has five subunits: alpha(3), beta(3), gamma(1), delta(1), epsilon(1). CF(0) has three main subunits: a(1), b(2) and c(9-12). The alpha and beta chains form an alternating ring which encloses part of the gamma chain. CF(1) is attached to CF(0) by a central stalk formed by the gamma and epsilon chains, while a peripheral stalk is formed by the delta and b chains.

It is found in the cell inner membrane. The enzyme catalyses ATP + H2O + 4 H(+)(in) = ADP + phosphate + 5 H(+)(out). In terms of biological role, produces ATP from ADP in the presence of a proton gradient across the membrane. The catalytic sites are hosted primarily by the beta subunits. This chain is ATP synthase subunit beta, found in Neisseria meningitidis serogroup B (strain ATCC BAA-335 / MC58).